The primary structure comprises 454 residues: tRNA modification GTPase MnmE (454 aa).

(6S)-5-formyl-5,6,7,8-tetrahydrofolate contacts are provided by Arg-23, Glu-80, and Lys-120. The TrmE-type G domain occupies 216 to 377; sequence GMKVVIAGRP…LRNHLKQSMG (162 aa). Residue Asn-226 participates in K(+) binding. GTP is bound by residues 226–231, 245–251, 270–273, 335–338, and 358–360; these read NAGKSS, TDIAGTT, DTAG, NKAD, and SAR. Position 230 (Ser-230) interacts with Mg(2+). Residues Thr-245, Ile-247, and Thr-250 each contribute to the K(+) site. Position 251 (Thr-251) interacts with Mg(2+). (6S)-5-formyl-5,6,7,8-tetrahydrofolate is bound at residue Lys-454.

It belongs to the TRAFAC class TrmE-Era-EngA-EngB-Septin-like GTPase superfamily. TrmE GTPase family. In terms of assembly, homodimer. Heterotetramer of two MnmE and two MnmG subunits. The cofactor is K(+).

The protein localises to the cytoplasm. In terms of biological role, exhibits a very high intrinsic GTPase hydrolysis rate. Involved in the addition of a carboxymethylaminomethyl (cmnm) group at the wobble position (U34) of certain tRNAs, forming tRNA-cmnm(5)s(2)U34. The chain is tRNA modification GTPase MnmE from Shigella flexneri serotype 5b (strain 8401).